The primary structure comprises 175 residues: Gamma-crystallin A (175 aa).

2 Beta/gamma crystallin 'Greek key' domains span residues 2-40 (GKITFYEDRGFQGHCYQCSSNNCLQQPYFSRCNSIRVDV) and 41-83 (HSWF…RLIP). The segment at 84–88 (QHTGT) is connecting peptide. 2 Beta/gamma crystallin 'Greek key' domains span residues 89–129 (FRMR…RVLE) and 130–172 (GSWV…RRVM).

Belongs to the beta/gamma-crystallin family.

Functionally, crystallins are the dominant structural components of the vertebrate eye lens. This is Gamma-crystallin A (CRYGA) from Bos taurus (Bovine).